The sequence spans 290 residues: Glycine--tRNA ligase alpha subunit (290 aa).

The protein belongs to the class-II aminoacyl-tRNA synthetase family. In terms of assembly, tetramer of two alpha and two beta subunits.

It localises to the cytoplasm. It carries out the reaction tRNA(Gly) + glycine + ATP = glycyl-tRNA(Gly) + AMP + diphosphate. The polypeptide is Glycine--tRNA ligase alpha subunit (Nitratiruptor sp. (strain SB155-2)).